A 452-amino-acid chain; its full sequence is Exodeoxyribonuclease 7 large subunit (452 aa).

It belongs to the XseA family. Heterooligomer composed of large and small subunits.

It localises to the cytoplasm. It carries out the reaction Exonucleolytic cleavage in either 5'- to 3'- or 3'- to 5'-direction to yield nucleoside 5'-phosphates.. Functionally, bidirectionally degrades single-stranded DNA into large acid-insoluble oligonucleotides, which are then degraded further into small acid-soluble oligonucleotides. The polypeptide is Exodeoxyribonuclease 7 large subunit (Bacillus mycoides (strain KBAB4) (Bacillus weihenstephanensis)).